A 229-amino-acid chain; its full sequence is Biosynthetic peptidoglycan transglycosylase (229 aa).

The helical transmembrane segment at 14-34 (FITWRFLLVVVLLLLVLLLVL) threads the bilayer.

It belongs to the glycosyltransferase 51 family.

It is found in the cell inner membrane. The enzyme catalyses [GlcNAc-(1-&gt;4)-Mur2Ac(oyl-L-Ala-gamma-D-Glu-L-Lys-D-Ala-D-Ala)](n)-di-trans,octa-cis-undecaprenyl diphosphate + beta-D-GlcNAc-(1-&gt;4)-Mur2Ac(oyl-L-Ala-gamma-D-Glu-L-Lys-D-Ala-D-Ala)-di-trans,octa-cis-undecaprenyl diphosphate = [GlcNAc-(1-&gt;4)-Mur2Ac(oyl-L-Ala-gamma-D-Glu-L-Lys-D-Ala-D-Ala)](n+1)-di-trans,octa-cis-undecaprenyl diphosphate + di-trans,octa-cis-undecaprenyl diphosphate + H(+). It functions in the pathway cell wall biogenesis; peptidoglycan biosynthesis. Functionally, peptidoglycan polymerase that catalyzes glycan chain elongation from lipid-linked precursors. This chain is Biosynthetic peptidoglycan transglycosylase, found in Shewanella denitrificans (strain OS217 / ATCC BAA-1090 / DSM 15013).